Here is a 1904-residue protein sequence, read N- to C-terminus: MARVYSNWDRLVRATLRREQLRNTGQGHERVSSGLAGAVPPSLGRATNIDAILQAADEIQSEDPSVARILCEQAYSMAQNLDPNSDGRGVLQFKTGLMSVIKQKLAKRDGASIDRDRDIERLWEFYKLYKRRHRVDDIQKEEQKWRESGTTFSSNVGEILKMRKVFATLRALIEVLEVLSRDADPNGVGRSIRDELGRIKKADATLSAELTPYNIVPLEAQSMTNAIGVFPEVRGAVQAIRYTEHFPRLPVDFEISGQRDADMFDLLEYIFGFQRDNVRNQREHLVLTLSNAQSQLSIPGQNDPKIDENAVNEVFLKVLDNYIKWCKYLRIRVVYNKLEAIDRDRKLFLVSLYFLIWGEAANVRFLPECICYIFHNMAKELDAKLDHGEAVRADSCLTGTDTGSVSFLERIICPIYETISAETVRNNGGKAAHSEWRNYDDFNEYFWTPACFELSWPMKTESRFLSKPKGRKRTAKSSFVEHRTYLHLFRSFIRLWIFMFIMFQSLTIIAFRNEHLNIETFKILLSAGPTYAIMNFIECLLDVVLMYGAYSMARGMAISRLVIRFLWWGLGSAFVVYYYVKVLDERNKPNQNEFFFHLYILVLGCYAAVRLIFGLLVKLPACHALSEMSDQSFFQFFKWIYQERYFVGRGLFENLSDYCRYVAFWLVVLASKFTFAYFLQIKPLVKPTNTIIHLPPFQYSWHDIVSKSNDHALTIVSLWAPVLAIYLMDIHIWYTLLSAIIGGVMGAKARLGEIRTIEMVHKRFESFPEAFAQNLVSPVVKRVPLGQHASQDGQDMNKAYAAMFSPFWNEIIKSLREEDYLSNREMDLLSIPSNTGSLRLVQWPLFLLCSKILVAIDLAMECKETQEVLWRQICDDEYMAYAVQECYYSVEKILNSMVNDEGRRWVERIFLEISNSIEQGSLAITLNLKKLQLVVSRFTALTGLLIRNETPDLAKGAAKAMFDFYEVVTHDLLSHDLREQLDTWNILARARNEGRLFSRIAWPRDPEIIEQVKRLHLLLTVKDAAANVPKNLEARRRLEFFTNSLFMDMPQARPVAEMVPFSVFTPYYSETVLYSSSELRSENEDGISILFYLQKIFPDEWENFLERIGRSESTGDADLQASSTDALELRFWVSYRGQTLARTVRGMMYYRRALMLQSFLERRGLGVDDASLTNMPRGFESSIEARAQADLKFTYVVSCQIYGQQKQQKKPEATDIGLLLQRYEALRVAFIHSEDVGNGDGGSGGKKEFYSKLVKADIHGKDEEIYSIKLPGDPKLGEGKPENQNHAIVFTRGEAIQTIDMNQDNYLEEAIKMRNLLEEFHGKHGIRRPTILGVREHVFTGSVSSLAWFMSNQETSFVTLGQRVLAYPLKVRMHYGHPDVFDRIFHITRGGISKASRVINISEDIYAGFNSTLRQGNITHHEYIQVGKGRDVGLNQIALFEGKVAGGNGEQVLSRDVYRIGQLFDFFRMMSFYFTTVGFYVCTMMTVLTVYVFLYGRVYLAFSGADRAISRVAKLSGNTALDAALNAQFLVQIGIFTAVPMVMGFILELGLLKAIFSFITMQFQLCSVFFTFSLGTRTHYFGRTILHGGAKYRATGRGFVVQHIKFADNYRLYSRSHFVKAFEVALLLIIYIAYGYTDGGASSFVLLTISSWFLVISWLFAPYIFNPSGFEWQKTVEDFEDWVSWLMYKGGVGVKGELSWESWWEEEQAHIQTLRGRILETILSLRFFMFQYGIVYKLDLTRKNTSLALYGYSWVVLVVIVFLFKLFWYSPRKSSNILLALRFLQGVASITFIALIVVAIAMTDLSIPDMFACVLGFIPTGWALLSLAITWKQVLRVLGLWETVREFGRIYDAAMGMLIFSPIALLSWFPFISTFQSRLLFNQAFSRGLEISIILAGNRANVET.

Residues 100 to 132 (VIKQKLAKRDGASIDRDRDIERLWEFYKLYKRR) form an HAT 1 repeat. 6 helical membrane-spanning segments follow: residues 491 to 511 (SFIRLWIFMFIMFQSLTIIAF), 532 to 552 (AIMNFIECLLDVVLMYGAYSM), 562 to 582 (VIRFLWWGLGSAFVVYYYVKV), 594 to 614 (FFFHLYILVLGCYAAVRLIFG), 661 to 681 (YVAFWLVVLASKFTFAYFLQI), and 722 to 742 (VLAIYLMDIHIWYTLLSAIIG). The LRR 1 repeat unit spans residues 678–701 (FLQIKPLVKPTNTIIHLPPFQYSW). LRR repeat units follow at residues 751 to 774 (LGEIRTIEMVHKRFESFPEAFAQN) and 925 to 948 (TLNLKKLQLVVSRFTALTGLLIRN). The stretch at 1074 to 1107 (YSSSELRSENEDGISILFYLQKIFPDEWENFLER) is one HAT 2 repeat. Residues 1159 to 1181 (FLERRGLGVDDASLTNMPRGFES) form an LRR 4 repeat. 9 helical membrane-spanning segments follow: residues 1474 to 1494 (FTTVGFYVCTMMTVLTVYVFL), 1529 to 1549 (FLVQIGIFTAVPMVMGFILEL), 1554 to 1574 (AIFSFITMQFQLCSVFFTFSL), 1621 to 1641 (AFEVALLLIIYIAYGYTDGGA), 1644 to 1664 (FVLLTISSWFLVISWLFAPYI), 1747 to 1767 (LALYGYSWVVLVVIVFLFKLF), 1783 to 1803 (FLQGVASITFIALIVVAIAMT), 1811 to 1831 (FACVLGFIPTGWALLSLAITW), and 1853 to 1873 (AAMGMLIFSPIALLSWFPFIS). One copy of the HAT 3 repeat lies at 1659–1691 (LFAPYIFNPSGFEWQKTVEDFEDWVSWLMYKGG).

The protein belongs to the glycosyltransferase 48 family.

The protein resides in the cell membrane. It carries out the reaction [(1-&gt;3)-beta-D-glucosyl](n) + UDP-alpha-D-glucose = [(1-&gt;3)-beta-D-glucosyl](n+1) + UDP + H(+). Its function is as follows. Involved in sporophytic and gametophytic development. Required for normal plant development and for the proper accumulation of callose at cell plates, cll walls and plasmodesmata. During pollen formation, required for the entry of microspores into mitosis. During plant growth and development, callose is found as a transitory component of the cell plate in dividing cells, is a major component of pollen mother cell walls and pollen tubes, and is found as a structural component of plasmodesmatal canals. Required for proper cell division and tissue patterning throughout plant organs, including stomatal patterning. This is Callose synthase 10 (CALS10) from Arabidopsis thaliana (Mouse-ear cress).